The sequence spans 447 residues: Rab GDP dissociation inhibitor alpha (447 aa).

Belongs to the Rab GDI family. Interacts with RHOH. Interacts with the non-phosphorylated forms of RAB1A, RAB3A, RAB5A, RAB5B, RAB5C, RAB8A, RAB8B, RAB10, RAB12, RAB35, and RAB43.

It is found in the cytoplasm. The protein resides in the golgi apparatus. Its subcellular location is the trans-Golgi network. Regulates the GDP/GTP exchange reaction of most Rab proteins by inhibiting the dissociation of GDP from them, and the subsequent binding of GTP to them. Promotes the dissociation of GDP-bound Rab proteins from the membrane and inhibits their activation. Promotes the dissociation of RAB1A, RAB3A, RAB5A and RAB10 from membranes. This is Rab GDP dissociation inhibitor alpha (GDI1) from Macaca fascicularis (Crab-eating macaque).